The sequence spans 68 residues: Putative protein YfaH (68 aa).

The sequence is that of Putative protein YfaH (yfaH) from Escherichia coli (strain K12).